A 465-amino-acid polypeptide reads, in one-letter code: MESLRIYNTLARDKQDFVPRQPGEVRMYVCGITVYDYCHIGHARMVVVFDIVQRWLRARGYRVTYVRNITDIDDKIIRRAVENGETIQSLTRRFTDAMNADFDALGVERPDLEPRATEFIPQMLGMIEKLEANGYAYQAKDGDVNYSVRKFANYGRLSGKSLEDLRAGERVAANDAKEDPLDFVLWKRAKPQEPAGASWESKYGAGRPGWHIECSAMGCTLLGAHFDIHGGGQDLQFPHHENEIAQSEGATGQTFVNYWMHNGFVQVDSEKMSKSLGNFFTIREVLEKFDAEVVRFFIVRTHYRSPLNYSDVHLDDARASLTRLYTALKDATPDAQPLDWSEAHAQRFAAAMNDDFNTAVAVAVLFELATEVNRTREPALARQLRLLAGLLGLLGREPREFLQHAAGAARTGALEPHEIEARIAARVAAKQAKNYAEADRIRAELLEAGIALEDKPGGSTEWRRV.

C30 serves as a coordination point for Zn(2+). The 'HIGH' region motif lies at 32-42; sequence ITVYDYCHIGH. Residues C214, H239, and E243 each coordinate Zn(2+). The short motif at 271-275 is the 'KMSKS' region element; sequence KMSKS. ATP is bound at residue K274.

Belongs to the class-I aminoacyl-tRNA synthetase family. Monomer. Requires Zn(2+) as cofactor.

Its subcellular location is the cytoplasm. It carries out the reaction tRNA(Cys) + L-cysteine + ATP = L-cysteinyl-tRNA(Cys) + AMP + diphosphate. This Burkholderia mallei (strain NCTC 10229) protein is Cysteine--tRNA ligase.